The following is a 354-amino-acid chain: MSQHTSQYVFNSKEDYNVILDNMSREFEERWNHQTQSPYTNLENYITRAVLGNGSFGTVMLVREKSGKNYYAAKMMSKEDLVRLKQVAHVHNEKHVLNAARFPFLIYLVDSTKCFDYLYLILPLVNGGELFSYHRRVRKFNEKHARFYAAQVALALEYMHKMHLMYRDLKPENILLDQRGYIKITDFGFTKRVDGRTSTLCGTPEYLAPEIVQLRPYNKSVDWWAFGILVYEFVAGRSPFAIHNRDVILMYSKICICDYKMPSYFTSQLRSLVESLMQVDTSKRLGNSNDGSSDVKSHPWFQGVDWFGILNQEVTAPYQPTISGAEDLSNFENFEFKDRYKSRINRHPELFANF.

The Protein kinase domain maps to Tyr45–Phe301. Residues Leu51–Val59 and Lys74 contribute to the ATP site. The Proton acceptor role is filled by Asp168. The 53-residue stretch at Gln302–Phe354 folds into the AGC-kinase C-terminal domain.

This sequence belongs to the protein kinase superfamily. AGC Ser/Thr protein kinase family. cAMP subfamily. As to expression, more abundant in adult body than adult head.

The catalysed reaction is L-seryl-[protein] + ATP = O-phospho-L-seryl-[protein] + ADP + H(+). It carries out the reaction L-threonyl-[protein] + ATP = O-phospho-L-threonyl-[protein] + ADP + H(+). This Drosophila melanogaster (Fruit fly) protein is cAMP-dependent protein kinase catalytic subunit 2 (Pka-C2).